A 412-amino-acid chain; its full sequence is Non-specific lipid-transfer protein-like 2 (412 aa).

The short motif at 410-412 (SKI) is the Microbody targeting signal element.

Belongs to the thiolase-like superfamily. Thiolase family. In terms of tissue distribution, expressed in intestine, hypodermis and body-wall muscle.

It is found in the peroxisome. The catalysed reaction is choloyl-CoA + propanoyl-CoA = 3alpha,7alpha,12alpha-trihydroxy-24-oxo-5beta-cholestan-26-oyl-CoA + CoA. Its activity is regulated as follows. Inhibited by acetyl-CoA. Its function is as follows. Catalyzes the thiolytic cleavage of 3-ketoacyl-CoA with 8-16 carbon residues in the acyl group using a ping-pong mechanism whereby binding to 3-ketooctanoyl-CoA results in the release of acetyl-CoA and the subsequent addition of CoA produces 3-ketohexanohyl-CoA. Involved in the biosynthesis of the dauer pheromone by providing short chains of fatty acid that are attached to the ascarylose sugars of the pheromone. This chain is Non-specific lipid-transfer protein-like 2, found in Caenorhabditis elegans.